Consider the following 211-residue polypeptide: Endonuclease V (211 aa).

Asp-31 and Glu-95 together coordinate Mg(2+). The segment at Ile-182 to Asn-211 is disordered.

The protein belongs to the endonuclease V family. Mg(2+) serves as cofactor.

It is found in the cytoplasm. It catalyses the reaction Endonucleolytic cleavage at apurinic or apyrimidinic sites to products with a 5'-phosphate.. DNA repair enzyme involved in the repair of deaminated bases. Selectively cleaves double-stranded DNA at the second phosphodiester bond 3' to a deoxyinosine leaving behind the intact lesion on the nicked DNA. The protein is Endonuclease V of Pyrococcus horikoshii (strain ATCC 700860 / DSM 12428 / JCM 9974 / NBRC 100139 / OT-3).